Consider the following 330-residue polypeptide: Phenylalanine--tRNA ligase alpha subunit (330 aa).

E255 is a Mg(2+) binding site.

This sequence belongs to the class-II aminoacyl-tRNA synthetase family. Phe-tRNA synthetase alpha subunit type 1 subfamily. Tetramer of two alpha and two beta subunits. The cofactor is Mg(2+).

The protein localises to the cytoplasm. It carries out the reaction tRNA(Phe) + L-phenylalanine + ATP = L-phenylalanyl-tRNA(Phe) + AMP + diphosphate + H(+). This is Phenylalanine--tRNA ligase alpha subunit from Acinetobacter baumannii (strain SDF).